The following is a 212-amino-acid chain: Guanylate kinase (212 aa).

The Guanylate kinase-like domain occupies 14 to 192; sequence GTALVICAPS…AYDELRATYL (179 aa). 21–28 lines the ATP pocket; the sequence is APSGTGKT.

This sequence belongs to the guanylate kinase family.

The protein resides in the cytoplasm. It carries out the reaction GMP + ATP = GDP + ADP. In terms of biological role, essential for recycling GMP and indirectly, cGMP. The protein is Guanylate kinase of Lawsonia intracellularis (strain PHE/MN1-00).